The chain runs to 171 residues: ATP synthase subunit b (171 aa).

Residues 2–22 (FVVKMVLGFLILLSPLCATGL) form a helical membrane-spanning segment.

The protein belongs to the ATPase B chain family. F-type ATPases have 2 components, F(1) - the catalytic core - and F(0) - the membrane proton channel. F(1) has five subunits: alpha(3), beta(3), gamma(1), delta(1), epsilon(1). F(0) has three main subunits: a(1), b(2) and c(10-14). The alpha and beta chains form an alternating ring which encloses part of the gamma chain. F(1) is attached to F(0) by a central stalk formed by the gamma and epsilon chains, while a peripheral stalk is formed by the delta and b chains.

It localises to the cell inner membrane. F(1)F(0) ATP synthase produces ATP from ADP in the presence of a proton or sodium gradient. F-type ATPases consist of two structural domains, F(1) containing the extramembraneous catalytic core and F(0) containing the membrane proton channel, linked together by a central stalk and a peripheral stalk. During catalysis, ATP synthesis in the catalytic domain of F(1) is coupled via a rotary mechanism of the central stalk subunits to proton translocation. In terms of biological role, component of the F(0) channel, it forms part of the peripheral stalk, linking F(1) to F(0). The sequence is that of ATP synthase subunit b from Helicobacter pylori (strain ATCC 700392 / 26695) (Campylobacter pylori).